The chain runs to 275 residues: 3-methyl-2-oxobutanoate hydroxymethyltransferase (275 aa).

Mg(2+) contacts are provided by D51 and D90. Residues 51 to 52 (DS), D90, and K120 each bind 3-methyl-2-oxobutanoate. E122 is a binding site for Mg(2+). The Proton acceptor role is filled by E189.

The protein belongs to the PanB family. As to quaternary structure, homodecamer; pentamer of dimers. The cofactor is Mg(2+).

It localises to the cytoplasm. The catalysed reaction is 3-methyl-2-oxobutanoate + (6R)-5,10-methylene-5,6,7,8-tetrahydrofolate + H2O = 2-dehydropantoate + (6S)-5,6,7,8-tetrahydrofolate. The protein operates within cofactor biosynthesis; (R)-pantothenate biosynthesis; (R)-pantoate from 3-methyl-2-oxobutanoate: step 1/2. Functionally, catalyzes the reversible reaction in which hydroxymethyl group from 5,10-methylenetetrahydrofolate is transferred onto alpha-ketoisovalerate to form ketopantoate. The protein is 3-methyl-2-oxobutanoate hydroxymethyltransferase of Caulobacter vibrioides (strain ATCC 19089 / CIP 103742 / CB 15) (Caulobacter crescentus).